The following is a 366-amino-acid chain: Ferrochelatase (366 aa).

Fe cation contacts are provided by His-209 and Glu-290.

Belongs to the ferrochelatase family.

It localises to the cytoplasm. It carries out the reaction heme b + 2 H(+) = protoporphyrin IX + Fe(2+). It participates in porphyrin-containing compound metabolism; protoheme biosynthesis; protoheme from protoporphyrin-IX: step 1/1. In terms of biological role, catalyzes the ferrous insertion into protoporphyrin IX. The protein is Ferrochelatase of Teredinibacter turnerae (strain ATCC 39867 / T7901).